The chain runs to 363 residues: Probable methyltransferase-like protein 24 (363 aa).

The signal sequence occupies residues M1–S38. Positions G37–R62 are disordered.

This sequence belongs to the methyltransferase superfamily.

The protein resides in the secreted. Functionally, probable methyltransferase. This Rattus norvegicus (Rat) protein is Probable methyltransferase-like protein 24 (Mettl24).